The chain runs to 159 residues: 2-C-methyl-D-erythritol 2,4-cyclodiphosphate synthase (159 aa).

Positions 8 and 10 each coordinate a divalent metal cation. Residues 8–10 and 34–35 each bind 4-CDP-2-C-methyl-D-erythritol 2-phosphate; these read DVH and HS. An a divalent metal cation-binding site is contributed by His-42. 4-CDP-2-C-methyl-D-erythritol 2-phosphate-binding positions include 56 to 58, 61 to 65, 100 to 106, 132 to 135, Phe-139, and Arg-142; these read DIG, FPDTD, AQAPKML, and TTTE.

Belongs to the IspF family. As to quaternary structure, homotrimer. A divalent metal cation serves as cofactor.

The catalysed reaction is 4-CDP-2-C-methyl-D-erythritol 2-phosphate = 2-C-methyl-D-erythritol 2,4-cyclic diphosphate + CMP. Its pathway is isoprenoid biosynthesis; isopentenyl diphosphate biosynthesis via DXP pathway; isopentenyl diphosphate from 1-deoxy-D-xylulose 5-phosphate: step 4/6. Functionally, involved in the biosynthesis of isopentenyl diphosphate (IPP) and dimethylallyl diphosphate (DMAPP), two major building blocks of isoprenoid compounds. Catalyzes the conversion of 4-diphosphocytidyl-2-C-methyl-D-erythritol 2-phosphate (CDP-ME2P) to 2-C-methyl-D-erythritol 2,4-cyclodiphosphate (ME-CPP) with a corresponding release of cytidine 5-monophosphate (CMP). This chain is 2-C-methyl-D-erythritol 2,4-cyclodiphosphate synthase, found in Salmonella typhimurium (strain LT2 / SGSC1412 / ATCC 700720).